We begin with the raw amino-acid sequence, 537 residues long: Hexosyltransferase GAUT11 (537 aa).

Topologically, residues 1–16 (MRRWPVDHRRRGRRRL) are cytoplasmic. The chain crosses the membrane as a helical; Signal-anchor for type II membrane protein span at residues 17 to 37 (SSWIWFLLGSFSVAGLVLFIV). Residues 38 to 537 (QHYHHQQDPS…HPYLQDCVTA (500 aa)) are Lumenal-facing. 6 N-linked (GlcNAc...) asparagine glycosylation sites follow: asparagine 66, asparagine 247, asparagine 299, asparagine 403, asparagine 436, and asparagine 525.

It belongs to the glycosyltransferase 8 family. Monomer. Expressed in roots, inflorescences, siliques, seeds, leaves and stems.

The protein localises to the golgi apparatus membrane. The catalysed reaction is [(1-&gt;4)-alpha-D-galacturonosyl](n) + UDP-alpha-D-galacturonate = [(1-&gt;4)-alpha-D-galacturonosyl](n+1) + UDP + H(+). It functions in the pathway glycan metabolism; pectin biosynthesis. In terms of biological role, glycosyltransferase involved in pectin and/or xylans biosynthesis in cell walls. Required for the biosynthesis of pectin in seed coat epidermal (SCE) cells. Collaboratively with MUCI70, essential for the accumulation of seed mucilage, a gelatinous wall rich in unbranched rhamnogalacturonan I (RG I), and for shaping the surface morphology of seeds. Catalyzes homogalacturonan (HG) elongation by acting as an HG alpha-1,4 galacturonic acid transferase. The sequence is that of Hexosyltransferase GAUT11 from Arabidopsis thaliana (Mouse-ear cress).